The following is a 281-amino-acid chain: 2-dehydro-3-deoxyphosphooctonate aldolase (281 aa).

It belongs to the KdsA family.

The protein localises to the cytoplasm. The catalysed reaction is D-arabinose 5-phosphate + phosphoenolpyruvate + H2O = 3-deoxy-alpha-D-manno-2-octulosonate-8-phosphate + phosphate. Its pathway is carbohydrate biosynthesis; 3-deoxy-D-manno-octulosonate biosynthesis; 3-deoxy-D-manno-octulosonate from D-ribulose 5-phosphate: step 2/3. It functions in the pathway bacterial outer membrane biogenesis; lipopolysaccharide biosynthesis. This Marinobacter nauticus (strain ATCC 700491 / DSM 11845 / VT8) (Marinobacter aquaeolei) protein is 2-dehydro-3-deoxyphosphooctonate aldolase.